The primary structure comprises 382 residues: Lipid-A-disaccharide synthase (382 aa).

The protein belongs to the LpxB family.

It catalyses the reaction 2-N,3-O-bis[(3R)-3-hydroxytetradecanoyl]-alpha-D-glucosaminyl 1-phosphate + UDP-2-N,3-O-bis[(3R)-3-hydroxytetradecanoyl]-alpha-D-glucosamine = lipid A disaccharide (E. coli) + UDP + H(+). The enzyme catalyses a lipid X + a UDP-2-N,3-O-bis[(3R)-3-hydroxyacyl]-alpha-D-glucosamine = a lipid A disaccharide + UDP + H(+). The protein operates within glycolipid biosynthesis; lipid IV(A) biosynthesis; lipid IV(A) from (3R)-3-hydroxytetradecanoyl-[acyl-carrier-protein] and UDP-N-acetyl-alpha-D-glucosamine: step 5/6. In terms of biological role, condensation of UDP-2,3-diacylglucosamine and 2,3-diacylglucosamine-1-phosphate to form lipid A disaccharide, a precursor of lipid A, a phosphorylated glycolipid that anchors the lipopolysaccharide to the outer membrane of the cell. The chain is Lipid-A-disaccharide synthase from Escherichia coli (strain ATCC 8739 / DSM 1576 / NBRC 3972 / NCIMB 8545 / WDCM 00012 / Crooks).